The primary structure comprises 291 residues: MMRHRVKRMMLMTTACISLLLGSAPLYAQANDVQQKLAALEKSSGGRLGVALIDTADNAQTLYRADERFAMCSTSKVMAAAAVLKQSETQKKVLSQKVEIKSSDLINYNPITEKHVNGTMTLAELSAAALQYSDNTAMNKLIAHLGGPDKVTAFARAIGDNTFRLDRTEPTLNTAIPGDPRDTTTPLAMAQTLRNLTLGSALGETQRAQLVTWLKGNTTGAASIQAGLPTSWVVGDKTGSGDYGTTNDIAVIWPEGRAPLILVTYFTQPEQKAESRRDVLAAAAKIVTDGY.

The first 30 residues, 1–30 (MMRHRVKRMMLMTTACISLLLGSAPLYAQA), serve as a signal peptide directing secretion. Catalysis depends on S73, which acts as the Nucleophile; acyl-ester intermediate. Residues K76, S133, E169, and S240 each coordinate a beta-lactam.

The protein belongs to the class-A beta-lactamase family. As to quaternary structure, monomer.

Its subcellular location is the secreted. The catalysed reaction is a beta-lactam + H2O = a substituted beta-amino acid. With respect to regulation, inhibited by the beta-lactamase-blocking agents clavulanic acid, tazobactam and sulbactam; in the DH5alpha strain of E.coli. In terms of biological role, extended-spectrum beta-lactamase (ESBL) which confers resistance to penicillins, as well as first, third and fourth-generation cephalosporins. Has cefotaxime-hydrolyzing activity. Inactive against cephalosporin antibiotic, cefoxitin, and the carbapenem, imipenem. The sequence is that of Beta-lactamase CTX-M-8 from Citrobacter amalonaticus.